The sequence spans 1368 residues: Inactive tyrosine-protein kinase PRAG1 (1368 aa).

The interval 200–236 (CLKGPRPCTSPQPLRESLPSEDDSDQRCSPSGDSEGG) is disordered. Residue tyrosine 238 is modified to Phosphotyrosine; by CSK. Residues 297–330 (STANPPHLGPKKPSLNSEAASSSDGLSCGSSRSG) are disordered. Positions 317-330 (SSSDGLSCGSSRSG) are enriched in low complexity. Phosphotyrosine; by CSK is present on residues tyrosine 343 and tyrosine 391. 3 disordered regions span residues 392–443 (AESA…PNAA), 499–605 (LSSR…GAWS), and 636–792 (HSNS…KKIV). A compositionally biased stretch (polar residues) spans 414-434 (VSSGQVWTGDTWSQKTPSGWS). The segment covering 502–518 (RESHPHNMTENSSKEKP) has biased composition (basic and acidic residues). Low complexity-rich tracts occupy residues 522–535 (PKLS…SPVS) and 550–563 (SGSS…SRVP). 2 stretches are compositionally biased toward polar residues: residues 564-574 (TNLTSSCQTNG) and 652-666 (SGQN…SKSA). A phosphoserine mark is found at serine 667 and serine 716. Composition is skewed to polar residues over residues 707-717 (VSQSSAESLSP) and 725-741 (SFTT…SRTC). Phosphoserine occurs at positions 753 and 797. Disordered stretches follow at residues 799–818 (PDGF…SPKL) and 873–901 (NSKG…VSSQ). Over residues 887–901 (AATSTSSSQLSVSSQ) the composition is skewed to low complexity. A required for homodimerization region spans residues 906 to 949 (SSQLQLHSLLSSISSKEGTYAKLGGLYTQSLARLVTKCEDLFMG). Residues 940–1291 (VTKCEDLFMG…EAKRVLQCLL (352 aa)) enclose the Protein kinase domain. Residues 1134 to 1144 (SSPGPSANPSV) show a composition bias toward polar residues. Residues 1134–1166 (SSPGPSANPSVPTTTSRCPSAAPAATTACQGGP) are disordered. A compositionally biased stretch (low complexity) spans 1145-1162 (PTTTSRCPSAAPAATTAC). The tract at residues 1293–1368 (GPRRELVEQP…LQSLKLLQLL (76 aa)) is required for homodimerization.

It belongs to the protein kinase superfamily. In terms of assembly, homodimer. Dimerization leads to the catalytic activation of CSK. Interacts (via C-terminus) with RND2. Interacts with CSK (via SH2 domain) in a Tyr-391 phosphorylation-dependent manner; this interaction potentiates kinase activity of CSK. Interacts with NOTCH1 intracellular domain (N1ICD). Forms a complex with N1ICD and MAML1, in a MAML1-dependent manner. Post-translationally, phosphorylated by CSK on Tyr-238, Tyr-343, and Tyr-391; Tyr-391 is a primary site of phosphorylation. As to expression, highly-expressed in brain, including cortical and hippocampal pyramidal neurons, as well as in kidney, spleen, colon and small intestine.

The protein localises to the cytoplasm. It localises to the nucleus. The protein resides in the cell junction. Its subcellular location is the focal adhesion. Its function is as follows. Catalytically inactive protein kinase that acts as a scaffold protein. Functions as an effector of the small GTPase RND2, which stimulates RhoA activity and inhibits NGF-induced neurite outgrowth. Promotes Src family kinase (SFK) signallig by regulating the subcellular localization of CSK, a negative regulator of these kinases, leading to the regulation of cell morphology and motility by a CSK-dependent mechanism. Acts as a critical coactivator of Notch signaling. This chain is Inactive tyrosine-protein kinase PRAG1, found in Rattus norvegicus (Rat).